A 131-amino-acid chain; its full sequence is Small ribosomal subunit protein uS8 (131 aa).

It belongs to the universal ribosomal protein uS8 family. Part of the 30S ribosomal subunit. Contacts proteins S5 and S12.

In terms of biological role, one of the primary rRNA binding proteins, it binds directly to 16S rRNA central domain where it helps coordinate assembly of the platform of the 30S subunit. This Solibacter usitatus (strain Ellin6076) protein is Small ribosomal subunit protein uS8.